Consider the following 464-residue polypeptide: 3-isopropylmalate dehydratase large subunit (464 aa).

Positions 337, 397, and 400 each coordinate [4Fe-4S] cluster.

Belongs to the aconitase/IPM isomerase family. LeuC type 1 subfamily. As to quaternary structure, heterodimer of LeuC and LeuD. Requires [4Fe-4S] cluster as cofactor.

It carries out the reaction (2R,3S)-3-isopropylmalate = (2S)-2-isopropylmalate. It participates in amino-acid biosynthesis; L-leucine biosynthesis; L-leucine from 3-methyl-2-oxobutanoate: step 2/4. Catalyzes the isomerization between 2-isopropylmalate and 3-isopropylmalate, via the formation of 2-isopropylmaleate. In Bacillus mycoides (strain KBAB4) (Bacillus weihenstephanensis), this protein is 3-isopropylmalate dehydratase large subunit.